A 388-amino-acid polypeptide reads, in one-letter code: Putative nickel insertion protein (388 aa).

The protein belongs to the LarC family.

This Syntrophobacter fumaroxidans (strain DSM 10017 / MPOB) protein is Putative nickel insertion protein.